The chain runs to 135 residues: Putative pre-16S rRNA nuclease (135 aa).

This sequence belongs to the YqgF nuclease family.

It localises to the cytoplasm. In terms of biological role, could be a nuclease involved in processing of the 5'-end of pre-16S rRNA. The protein is Putative pre-16S rRNA nuclease of Thermus thermophilus (strain ATCC 27634 / DSM 579 / HB8).